Here is an 81-residue protein sequence, read N- to C-terminus: Accessory gland protein Acp63F (81 aa).

An N-terminal signal peptide occupies residues Met1–Ala16.

As to expression, main cells of accessory gland and seminal fluid.

The protein resides in the secreted. Functionally, responsible for physiological and behavioral changes in mated female flies. In Drosophila melanogaster (Fruit fly), this protein is Accessory gland protein Acp63F (Acp63F).